A 158-amino-acid chain; its full sequence is NADH-quinone oxidoreductase subunit B (158 aa).

Cysteine 37, cysteine 38, cysteine 102, and cysteine 132 together coordinate [4Fe-4S] cluster.

This sequence belongs to the complex I 20 kDa subunit family. In terms of assembly, NDH-1 is composed of 14 different subunits. Subunits NuoB, C, D, E, F, and G constitute the peripheral sector of the complex. The cofactor is [4Fe-4S] cluster.

The protein localises to the cell inner membrane. It catalyses the reaction a quinone + NADH + 5 H(+)(in) = a quinol + NAD(+) + 4 H(+)(out). Functionally, NDH-1 shuttles electrons from NADH, via FMN and iron-sulfur (Fe-S) centers, to quinones in the respiratory chain. The immediate electron acceptor for the enzyme in this species is believed to be ubiquinone. Couples the redox reaction to proton translocation (for every two electrons transferred, four hydrogen ions are translocated across the cytoplasmic membrane), and thus conserves the redox energy in a proton gradient. In Thioalkalivibrio sulfidiphilus (strain HL-EbGR7), this protein is NADH-quinone oxidoreductase subunit B.